The sequence spans 274 residues: Large ribosomal subunit protein uL2 (274 aa).

Positions 220–265 (VRGAAMNPRDHPHGGGEGRAPRGMSTPKTKWGKPARGVKTRHNPRF) are disordered. Positions 227–239 (PRDHPHGGGEGRA) are enriched in basic and acidic residues. Basic residues predominate over residues 249–262 (KWGKPARGVKTRHN).

The protein belongs to the universal ribosomal protein uL2 family. As to quaternary structure, part of the 50S ribosomal subunit. Forms a bridge to the 30S subunit in the 70S ribosome.

Its function is as follows. One of the primary rRNA binding proteins. Required for association of the 30S and 50S subunits to form the 70S ribosome, for tRNA binding and peptide bond formation. It has been suggested to have peptidyltransferase activity; this is somewhat controversial. Makes several contacts with the 16S rRNA in the 70S ribosome. This is Large ribosomal subunit protein uL2 from Chloroflexus aurantiacus (strain ATCC 29364 / DSM 637 / Y-400-fl).